A 223-amino-acid chain; its full sequence is MNSAKVNPSGHAPTPAPTASQGAAFPANRYALFFGLAIAGGALDLWSKEAIFRWRGLPGTQDVYWIIEGYFGIETAVNIGAVFGLGAGQGLVFAAISVFAAAAIIAWLFFFKAARSCWLTFALGCITGGIIGNLYDRLGFWWKPGLPDQWQSGVRDWILWQASDQWKWPNFNIADSLLVTGAIMLLVQSFFFPPPPHGEADGNELPGRRAPDEPTEGTKPAAS.

Residues 1 to 20 are disordered; that stretch reads MNSAKVNPSGHAPTPAPTAS. 4 consecutive transmembrane segments (helical) span residues 32–52, 65–85, 91–111, and 116–136; these read LFFG…EAIF, WIIE…VFGL, LVFA…LFFF, and SCWL…NLYD. Residues aspartate 156 and aspartate 175 contribute to the active site. The helical transmembrane segment at 173 to 193 threads the bilayer; the sequence is IADSLLVTGAIMLLVQSFFFP. A disordered region spans residues 196-223; that stretch reads PHGEADGNELPGRRAPDEPTEGTKPAAS.

The protein belongs to the peptidase A8 family.

The protein resides in the cell inner membrane. The catalysed reaction is Release of signal peptides from bacterial membrane prolipoproteins. Hydrolyzes -Xaa-Yaa-Zaa-|-(S,diacylglyceryl)Cys-, in which Xaa is hydrophobic (preferably Leu), and Yaa (Ala or Ser) and Zaa (Gly or Ala) have small, neutral side chains.. It functions in the pathway protein modification; lipoprotein biosynthesis (signal peptide cleavage). In terms of biological role, this protein specifically catalyzes the removal of signal peptides from prolipoproteins. The protein is Lipoprotein signal peptidase of Rhodopirellula baltica (strain DSM 10527 / NCIMB 13988 / SH1).